The chain runs to 296 residues: MTTTLKRPTDGEGSVQVHQDPSVNIEEETLVIAVYGKGGIGKSTTSSNLSAAFSKLGKRVLQIGCDPKHDSTFTLTHKMVPTVIDILEEVDFHSEELRPEDFVFSGFNGVQCVESGGPPAGTGCGGYVTGQTVKLLKEHHLLEDTDVVIFDVLGDVVCGGFAAPLQHANYCLIVTANDFDSIFAMNRIVQAIQAKAKNYKVRLGGVVANRSADTDQIDKFNERTGLRTMAHFKDVDAIRRSRLKKCTIFEMDDDDEAVQAVREEYLRLAQNMLDNVEPLEATSLKDREIFDLLGFD.

Residues Gly39–Thr44 and Lys68 each bind ATP. Ser43 contacts Mg(2+). 2 residues coordinate [4Fe-4S] cluster: Cys124 and Cys158. ATP is bound at residue Asn209–Arg210.

This sequence belongs to the NifH/BchL/ChlL family. In terms of assembly, homodimer. Protochlorophyllide reductase is composed of three subunits; ChlL, ChlN and ChlB. It depends on [4Fe-4S] cluster as a cofactor.

The enzyme catalyses chlorophyllide a + oxidized 2[4Fe-4S]-[ferredoxin] + 2 ADP + 2 phosphate = protochlorophyllide a + reduced 2[4Fe-4S]-[ferredoxin] + 2 ATP + 2 H2O. The protein operates within porphyrin-containing compound metabolism; chlorophyll biosynthesis (light-independent). Component of the dark-operative protochlorophyllide reductase (DPOR) that uses Mg-ATP and reduced ferredoxin to reduce ring D of protochlorophyllide (Pchlide) to form chlorophyllide a (Chlide). This reaction is light-independent. The L component serves as a unique electron donor to the NB-component of the complex, and binds Mg-ATP. This is Light-independent protochlorophyllide reductase iron-sulfur ATP-binding protein from Synechococcus sp. (strain WH7803).